The following is a 118-amino-acid chain: MKKVVHIGLPKLSEDELIEVGEIAQKVIINYIFDHLAKSEVRDMEVTARINQGETLDLELEVYVEVPIFVKVDVESLIDEAIDRAYEVVEEYLRKLAKGKGNEGREEAEEPLEEPEEG.

A disordered region spans residues 98 to 118 (KGKGNEGREEAEEPLEEPEEG). Residues 106–118 (EEAEEPLEEPEEG) show a composition bias toward acidic residues.

This sequence belongs to the UPF0440 family.

This is an uncharacterized protein from Pyrococcus abyssi (strain GE5 / Orsay).